Here is a 1098-residue protein sequence, read N- to C-terminus: MTQCASRRKSTPNRAILGAFASARGTRWVATIAGLIGFVLSVATPLLPVVQTTAMLDWPQRGQLGSVTAPLISLTPVDFTATVPCDVVRAMPPAGGVVLGTAPKQGKDANLQALFVVVSAQRVDVTDRNVVILSVPREQVTSPQCQRIEVTSTHAGTFANFVGLKDPSGAPLRSGFPDPNLRPQIVGVFTDLTGPAPPGLAVSATIDTRFSTRPTTLKLLAIIGAIVATVVALIALWRLDQLDGRGSIAQLLLRPFRPASSPGGMRRLIPASWRTFTLTDAVVIFGFLLWHVIGANSSDDGYILGMARVADHAGYMSNYFRWFGSPEDPFGWYYNLLALMTHVSDASLWMRLPDLAAGLVCWLLLSREVLPRLGPAVEASKPAYWAAAMVLLTAWMPFNNGLRPEGIIALGSLVTYVLIERSMRYSRLTPAALAVVTAAFTLGVQPTGLIAVAALVAGGRPMLRILVRRHRLVGTLPLVSPMLAAGTVILTVVFADQTLSTVLEATRVRAKIGPSQAWYTENLRYYYLILPTVDGSLSRRFGFLITALCLFTAVFIMLRRKRIPSVARGPAWRLMGVIFGTMFFLMFTPTKWVHHFGLFAAVGAAMAALTTVLVSPSVLRWSRNRMAFLAALFFLLALCWATTNGWWYVSSYGVPFNSAMPKIDGITVSTIFFALFAIAAGYAAWLHFAPRGAGEGRLIRALTTAPVPIVAGFMAAVFVASMVAGIVRQYPTYSNGWSNVRAFVGGCGLADDVLVEPDTNAGFMKPLDGDSGSWGPLGPLGGVNPVGFTPNGVPEHTVAEAIVMKPNQPGTDYDWDAPTKLTSPGINGSTVPLPYGLDPARVPLAGTYTTGAQQQSTLVSAWYLLPKPDDGHPLVVVTAAGKIAGNSVLHGYTPGQTVVLEYAMPGPGALVPAGRMVPDDLYGEQPKAWRNLRFARAKMPADAVAVRVVAEDLSLTPEDWIAVTPPRVPDLRSLQEYVGSTQPVLLDWAVGLAFPCQQPMLHANGIAEIPKFRITPDYSAKKLDTDTWEDGTNGGLLGITDLLLRAHVMATYLSRDWARDWGSLRKFDTLVDAPPAQLELGTATRSGLWSPGKIRIGP.

A run of 12 helical transmembrane segments spans residues 28-50, 217-239, 271-293, 402-419, 434-456, 472-494, 541-558, 570-587, 597-619, 626-648, 663-685, and 698-720; these read WVATIAGLIGFVLSVATPLLPVV, LKLLAIIGAIVATVVALIALWRL, ASWRTFTLTDAVVIFGFLLWHVI, LRPEGIIALGSLVTYVLI, AVVTAAFTLGVQPTGLIAVAALV, LVGTLPLVSPMLAAGTVILTVVF, FGFLITALCLFTAVFIML, PAWRLMGVIFGTMFFLMF, GLFAAVGAAMAALTTVLVSPSVL, MAFLAALFFLLALCWATTNGWWY, IDGITVSTIFFALFAIAAGYAAW, and LIRALTTAPVPIVAGFMAAVFVA.

The protein belongs to the emb family.

It is found in the cell membrane. In terms of biological role, arabinosyl transferase responsible for the polymerization of arabinose into the arabinan of arabinogalactan. This is Probable arabinosyltransferase B (embB) from Mycobacterium tuberculosis (strain CDC 1551 / Oshkosh).